A 229-amino-acid chain; its full sequence is Urease accessory protein UreG (229 aa).

Over residues M1 to H15 the composition is skewed to basic and acidic residues. The interval M1 to R20 is disordered. A GTP-binding site is contributed by G34–T41.

Belongs to the SIMIBI class G3E GTPase family. UreG subfamily. In terms of assembly, homodimer. UreD, UreF and UreG form a complex that acts as a GTP-hydrolysis-dependent molecular chaperone, activating the urease apoprotein by helping to assemble the nickel containing metallocenter of UreC. The UreE protein probably delivers the nickel.

It is found in the cytoplasm. Facilitates the functional incorporation of the urease nickel metallocenter. This process requires GTP hydrolysis, probably effectuated by UreG. This Rhodococcus jostii (strain RHA1) protein is Urease accessory protein UreG.